The primary structure comprises 205 residues: Ribonuclease HII (205 aa).

The region spanning 14–201 (EIIAGVDEAG…KGNINHSAIL (188 aa)) is the RNase H type-2 domain. Residues Asp-20, Glu-21, and Asp-111 each coordinate a divalent metal cation.

The protein belongs to the RNase HII family. Mn(2+) serves as cofactor. Requires Mg(2+) as cofactor.

It localises to the cytoplasm. It carries out the reaction Endonucleolytic cleavage to 5'-phosphomonoester.. Endonuclease that specifically degrades the RNA of RNA-DNA hybrids. The polypeptide is Ribonuclease HII (Orientia tsutsugamushi (strain Ikeda) (Rickettsia tsutsugamushi)).